The sequence spans 869 residues: Bifunctional uridylyltransferase/uridylyl-removing enzyme (869 aa).

Positions 1 to 332 (MTDAPAERPD…QFDGEATPES (332 aa)) are uridylyltransferase. The uridylyl-removing stretch occupies residues 333 to 691 (LGGGFSLRRG…RRAVPDNDAL (359 aa)). The HD domain occupies 450–572 (VDQHTLMVLR…VGTRERLDYL (123 aa)). ACT domains follow at residues 692–774 (EVFV…RAVP) and 798–869 (RISL…LDPV).

The protein belongs to the GlnD family. Requires Mg(2+) as cofactor.

The catalysed reaction is [protein-PII]-L-tyrosine + UTP = [protein-PII]-uridylyl-L-tyrosine + diphosphate. It catalyses the reaction [protein-PII]-uridylyl-L-tyrosine + H2O = [protein-PII]-L-tyrosine + UMP + H(+). With respect to regulation, uridylyltransferase (UTase) activity is inhibited by glutamine, while glutamine activates uridylyl-removing (UR) activity. Modifies, by uridylylation and deuridylylation, the PII regulatory proteins (GlnB and homologs), in response to the nitrogen status of the cell that GlnD senses through the glutamine level. Under low glutamine levels, catalyzes the conversion of the PII proteins and UTP to PII-UMP and PPi, while under higher glutamine levels, GlnD hydrolyzes PII-UMP to PII and UMP (deuridylylation). Thus, controls uridylylation state and activity of the PII proteins, and plays an important role in the regulation of nitrogen assimilation and metabolism. This is Bifunctional uridylyltransferase/uridylyl-removing enzyme from Xanthomonas oryzae pv. oryzae (strain MAFF 311018).